Here is a 207-residue protein sequence, read N- to C-terminus: Small ribosomal subunit protein uS4 (207 aa).

The disordered stretch occupies residues 31–53; sequence KAKFDSKPGQHGRTSGARTSDFG. Residues 97–160 form the S4 RNA-binding domain; it reads SRLDNVVYRM…KKQNRIVEAL (64 aa).

This sequence belongs to the universal ribosomal protein uS4 family. Part of the 30S ribosomal subunit. Contacts protein S5. The interaction surface between S4 and S5 is involved in control of translational fidelity.

Its function is as follows. One of the primary rRNA binding proteins, it binds directly to 16S rRNA where it nucleates assembly of the body of the 30S subunit. With S5 and S12 plays an important role in translational accuracy. The chain is Small ribosomal subunit protein uS4 from Albidiferax ferrireducens (strain ATCC BAA-621 / DSM 15236 / T118) (Rhodoferax ferrireducens).